A 242-amino-acid polypeptide reads, in one-letter code: uncharacterized protein (242 aa).

A run of 2 helical transmembrane segments spans residues 4-24 and 34-54; these read NYQV…YYVV and LLFG…WLFG. N-linked (GlcNAc...) asparagine; by host glycosylation occurs at Asn-73. The next 3 helical transmembrane spans lie at 74-94, 106-126, and 162-182; these read YTIV…VIGY, VLTV…YGGF, and LDVF…FVMY. Asn-185 carries N-linked (GlcNAc...) asparagine; by host glycosylation. 2 helical membrane-spanning segments follow: residues 189–209 and 217–237; these read VIGL…APTL and CLLS…STGI.

It is found in the membrane. This is an uncharacterized protein from Acanthamoeba polyphaga mimivirus (APMV).